A 499-amino-acid polypeptide reads, in one-letter code: Apolipoprotein N-acyltransferase (499 aa).

The next 6 membrane-spanning stretches (helical) occupy residues 17–37, 38–58, 84–104, 131–151, 163–183, and 198–218; these read VLAG…ALAL, LWSA…AVLL, ASIW…WAWL, IWGL…GVGG, LARW…GWWL, and RSLL…WSLL. The region spanning 232-458 is the CN hydrolase domain; that stretch reads WQPAIPTRSK…EGVGLADLHF (227 aa). E273 functions as the Proton acceptor in the catalytic mechanism. K322 is a catalytic residue. C370 functions as the Nucleophile in the catalytic mechanism. A helical membrane pass occupies residues 474-494; sequence IGLMLFAVVGLGLSRVRSWLI.

It belongs to the CN hydrolase family. Apolipoprotein N-acyltransferase subfamily.

Its subcellular location is the cell inner membrane. The enzyme catalyses N-terminal S-1,2-diacyl-sn-glyceryl-L-cysteinyl-[lipoprotein] + a glycerophospholipid = N-acyl-S-1,2-diacyl-sn-glyceryl-L-cysteinyl-[lipoprotein] + a 2-acyl-sn-glycero-3-phospholipid + H(+). It functions in the pathway protein modification; lipoprotein biosynthesis (N-acyl transfer). Its function is as follows. Catalyzes the phospholipid dependent N-acylation of the N-terminal cysteine of apolipoprotein, the last step in lipoprotein maturation. The polypeptide is Apolipoprotein N-acyltransferase (Prochlorococcus marinus (strain MIT 9313)).